The chain runs to 115 residues: MMSAKNMVKVMIVMFAIFLLAKSDGKPVRKRSVSEIQLMHNLGKHLNSVERVEWLRKKLQDVHNFIALGAPIFHRDGGSQRPRKKEDNVLIESHQKSLGEADKADVDVLSKTKSQ.

The first 25 residues, 1–25 (MMSAKNMVKVMIVMFAIFLLAKSDG), serve as a signal peptide directing secretion. The propeptide occupies 26–31 (KPVRKR). The tract at residues 51-69 (RVEWLRKKLQDVHNFIALG) is important for receptor binding. Positions 73 to 115 (FHRDGGSQRPRKKEDNVLIESHQKSLGEADKADVDVLSKTKSQ) are disordered.

This sequence belongs to the parathyroid hormone family. In terms of assembly, interacts with PTH1R (via N-terminal extracellular domain).

It is found in the secreted. Functionally, parathyroid hormone elevates calcium level by dissolving the salts in bone and preventing their renal excretion. Acts by binding to its receptor, PTH1R, activating G protein-coupled receptor signaling. Stimulates [1-14C]-2-deoxy-D-glucose (2DG) transport and glycogen synthesis in osteoblastic cells. The polypeptide is Parathyroid hormone (PTH) (Equus caballus (Horse)).